We begin with the raw amino-acid sequence, 172 residues long: C-phycocyanin beta chain (172 aa).

N4-methylasparagine is present on Asn-72. The (2R,3E)-phycocyanobilin site is built by Cys-82 and Cys-153.

The protein belongs to the phycobiliprotein family. Heterodimer of an alpha and a beta subunit, which further assembles into trimers and the trimers into hexamers. The basic functional unit of phycobiliproteins is a ring-shaped hexamer formed from two back-to-back trimers contacting via the alpha chain subunits. The trimers are composed of alpha/beta subunit heterodimers arranged around a three-fold axis of symmetry. The phycoerythrins also contain a gamma subunit which is located in the center of the hexamer. Contains two covalently linked bilin chromophores.

The protein localises to the plastid. The protein resides in the chloroplast thylakoid membrane. Its function is as follows. Light-harvesting photosynthetic bile pigment-protein from the phycobiliprotein complex (phycobilisome, PBS). Phycocyanin is the major phycobiliprotein in the PBS rod. In Pyropia haitanensis (Red seaweed), this protein is C-phycocyanin beta chain (cpcB).